The chain runs to 413 residues: Cell division protein FtsA (413 aa).

Belongs to the FtsA/MreB family. In terms of assembly, self-interacts. Interacts with FtsZ.

Its subcellular location is the cell inner membrane. Functionally, cell division protein that is involved in the assembly of the Z ring. May serve as a membrane anchor for the Z ring. The chain is Cell division protein FtsA from Borreliella burgdorferi (strain ATCC 35210 / DSM 4680 / CIP 102532 / B31) (Borrelia burgdorferi).